Reading from the N-terminus, the 217-residue chain is Large ribosomal subunit protein uL3 (217 aa).

Residues Ala-135–Thr-154 form a disordered region. Residue Gln-153 is modified to N5-methylglutamine.

This sequence belongs to the universal ribosomal protein uL3 family. Part of the 50S ribosomal subunit. Forms a cluster with proteins L14 and L19. In terms of processing, methylated by PrmB.

In terms of biological role, one of the primary rRNA binding proteins, it binds directly near the 3'-end of the 23S rRNA, where it nucleates assembly of the 50S subunit. The chain is Large ribosomal subunit protein uL3 from Coxiella burnetii (strain CbuG_Q212) (Coxiella burnetii (strain Q212)).